The following is a 356-amino-acid chain: Dihydroorotate dehydrogenase (quinone) (356 aa).

FMN contacts are provided by residues 60-64 (AGFDK) and serine 84. Lysine 64 is a substrate binding site. Residue 109–113 (NRFGF) coordinates substrate. Residues asparagine 140 and asparagine 171 each contribute to the FMN site. Asparagine 171 is a binding site for substrate. Serine 174 acts as the Nucleophile in catalysis. Asparagine 176 provides a ligand contact to substrate. FMN contacts are provided by lysine 216 and glycine 244. 245–246 (NT) contributes to the substrate binding site. Residues glycine 267, glycine 296, and 317–318 (YS) each bind FMN.

It belongs to the dihydroorotate dehydrogenase family. Type 2 subfamily. As to quaternary structure, monomer. Requires FMN as cofactor.

It localises to the cell membrane. It carries out the reaction (S)-dihydroorotate + a quinone = orotate + a quinol. Its pathway is pyrimidine metabolism; UMP biosynthesis via de novo pathway; orotate from (S)-dihydroorotate (quinone route): step 1/1. In terms of biological role, catalyzes the conversion of dihydroorotate to orotate with quinone as electron acceptor. This Azorhizobium caulinodans (strain ATCC 43989 / DSM 5975 / JCM 20966 / LMG 6465 / NBRC 14845 / NCIMB 13405 / ORS 571) protein is Dihydroorotate dehydrogenase (quinone).